Reading from the N-terminus, the 313-residue chain is tRNA-cytidine(32) 2-sulfurtransferase (313 aa).

The PP-loop motif signature appears at 47–52 (SGGKDS). [4Fe-4S] cluster-binding residues include Cys-122, Cys-125, and Cys-213.

Belongs to the TtcA family. In terms of assembly, homodimer. The cofactor is Mg(2+). [4Fe-4S] cluster is required as a cofactor.

The protein localises to the cytoplasm. It carries out the reaction cytidine(32) in tRNA + S-sulfanyl-L-cysteinyl-[cysteine desulfurase] + AH2 + ATP = 2-thiocytidine(32) in tRNA + L-cysteinyl-[cysteine desulfurase] + A + AMP + diphosphate + H(+). Its pathway is tRNA modification. In terms of biological role, catalyzes the ATP-dependent 2-thiolation of cytidine in position 32 of tRNA, to form 2-thiocytidine (s(2)C32). The sulfur atoms are provided by the cysteine/cysteine desulfurase (IscS) system. This chain is tRNA-cytidine(32) 2-sulfurtransferase, found in Yersinia pseudotuberculosis serotype IB (strain PB1/+).